The primary structure comprises 182 residues: MFTTIKKTVIGLFTIVRSMWMVNSHALRPRDTILYPEVPVPVPPRFRGRIILSRDPDGDERCVACNLCAVACPVGCISLQKAEREDGRWYPEFFRINFSRCIFCGLCEEACPTTAIQMTPDFEMGEYVRQDLVYEKEHLLISGPGKYPDYNYYRVTGMAVADKPKGAAQNEAAPIDLRSLLP.

2 consecutive 4Fe-4S ferredoxin-type domains span residues I50–A82 and E92–D121. 8 residues coordinate [4Fe-4S] cluster: C62, C65, C68, C72, C101, C104, C107, and C111.

The protein belongs to the complex I 23 kDa subunit family. In terms of assembly, NDH-1 is composed of 14 different subunits. Subunits NuoA, H, J, K, L, M, N constitute the membrane sector of the complex. The cofactor is [4Fe-4S] cluster.

It localises to the cell inner membrane. The catalysed reaction is a quinone + NADH + 5 H(+)(in) = a quinol + NAD(+) + 4 H(+)(out). In terms of biological role, NDH-1 shuttles electrons from NADH, via FMN and iron-sulfur (Fe-S) centers, to quinones in the respiratory chain. The immediate electron acceptor for the enzyme in this species is believed to be ubiquinone. Couples the redox reaction to proton translocation (for every two electrons transferred, four hydrogen ions are translocated across the cytoplasmic membrane), and thus conserves the redox energy in a proton gradient. This chain is NADH-quinone oxidoreductase subunit I, found in Psychrobacter cryohalolentis (strain ATCC BAA-1226 / DSM 17306 / VKM B-2378 / K5).